Here is a 143-residue protein sequence, read N- to C-terminus: Hemoglobin subunit alpha-1 (143 aa).

Position 2 is an N-acetylserine (serine 2). In terms of domain architecture, Globin spans 2 to 143 (SLTAKDKDTV…LSRALAEKYR (142 aa)). Residue histidine 60 participates in O2 binding. A heme b-binding site is contributed by histidine 89.

It belongs to the globin family. In terms of assembly, hb1 is a heterotetramer of two alpha-1 chains and two beta-1 chains. As to expression, red blood cells.

Involved in oxygen transport from gills to the various peripheral tissues. This chain is Hemoglobin subunit alpha-1 (hba1), found in Anarhichas minor (Arctic spotted wolffish).